The primary structure comprises 591 residues: Splicing factor U2af large subunit A (591 aa).

The disordered stretch occupies residues methionine 1–glutamine 215. The span at serine 27 to serine 36 shows a compositional bias: polar residues. 2 stretches are compositionally biased toward basic and acidic residues: residues serine 37–arginine 79 and arginine 157–glycine 191. RRM domains follow at residues arginine 272–aspartate 355 and aspartate 392–glutamine 470.

It belongs to the splicing factor SR family.

The protein resides in the nucleus. Its function is as follows. Necessary for the splicing of pre-mRNA. This is Splicing factor U2af large subunit A (U2AF65A) from Triticum aestivum (Wheat).